A 383-amino-acid polypeptide reads, in one-letter code: Cytochrome b (383 aa).

Helical transmembrane passes span 31–51 (FGSL…FLAM), 75–97 (WLMR…VHIF), 112–132 (LWCS…MGYV), and 178–198 (FFSL…IHLI). Heme b contacts are provided by His-81 and His-95. His-182 and His-196 together coordinate heme b. Position 201 (His-201) interacts with a ubiquinone. 4 helical membrane-spanning segments follow: residues 224 to 244 (FYTK…IFIF), 288 to 308 (IGGV…PFTN), 320 to 340 (IFKV…WVGQ), and 347 to 367 (YTEI…IIIP).

The protein belongs to the cytochrome b family. As to quaternary structure, fungal cytochrome b-c1 complex contains 10 subunits; 3 respiratory subunits, 2 core proteins and 5 low-molecular weight proteins. Cytochrome b-c1 complex is a homodimer. Requires heme b as cofactor.

It is found in the mitochondrion inner membrane. Functionally, component of the ubiquinol-cytochrome c reductase complex (complex III or cytochrome b-c1 complex) that is part of the mitochondrial respiratory chain. The b-c1 complex mediates electron transfer from ubiquinol to cytochrome c. Contributes to the generation of a proton gradient across the mitochondrial membrane that is then used for ATP synthesis. This is Cytochrome b (cob) from Phytophthora megasperma (Potato pink rot fungus).